The primary structure comprises 843 residues: Tetratricopeptide repeat protein 7B (843 aa).

The stretch at 97 to 131 is one TPR 1 repeat; it reads QESNLVMAKLTYVEGDYKEALNIYARVGLDDLPLT. Phosphoserine is present on residues serine 160 and serine 202. TPR repeat units lie at residues 219-252, 363-396, 397-430, 479-514, 516-548, and 549-582; these read ETGLQRAHVLYFKNGNLTRGVGRFRELLRAVETR, SVVYDLLTIALGRRGQYEMLSECLERAMKFAFEE, FHLWYQFALSLMAAGKSARAVKVLKECIRLKPDD, TYSLQATDASLRGMQEGLQRKALLAFQRAHSLSPTD, QAAFYLALQLAISRQIPEALGYVRQALQLQGDD, and ANSLHLLALLLSAQKHYHDALNIIDMALSEYPEN. Serine 625, serine 629, serine 630, serine 673, serine 677, serine 678, and serine 681 each carry phosphoserine. 4 TPR repeats span residues 696–729, 730–763, 765–797, and 798–831; these read AQIWLHAAEVYIGIGKPAEATACTQEAANLFPMS, HNVLYMRGQVAELRGHFDEARRWYEEALSISPTH, KSMQRLALVLHQLGRYSLAEKILRDAVQVNSTA, and HEVWNGLGEVLQAQGNDAAATECFLTALELEASS.

As to quaternary structure, component of a phosphatidylinositol 4-kinase (PI4K) complex, composed of PI4KA, EFR3 (EFR3A or EFR3B), TTC7 (TTC7A or TTC7B) and HYCC (HYCC1 or HYCC2). Interacts with PI4KA, interaction is direct. Interacts with EFR3 (EFR3A or EFR3B), interaction is direct. Interacts with HYCC (HYCC1 or HYCC2), interaction is direct. Association with the PI4K complex is strongly reduced by TMEM150A.

Its subcellular location is the cytoplasm. It localises to the cytosol. The protein localises to the cell membrane. Functionally, component of a complex required to localize phosphatidylinositol 4-kinase (PI4K) to the plasma membrane. The complex acts as a regulator of phosphatidylinositol 4-phosphate (PtdIns(4)P) synthesis. In the complex, plays a central role in bridging PI4KA to EFR3B and HYCC1, via direct interactions. The polypeptide is Tetratricopeptide repeat protein 7B (Mus musculus (Mouse)).